Here is a 447-residue protein sequence, read N- to C-terminus: Probable glycine dehydrogenase (decarboxylating) subunit 1 (447 aa).

It belongs to the GcvP family. N-terminal subunit subfamily. In terms of assembly, the glycine cleavage system is composed of four proteins: P, T, L and H. In this organism, the P 'protein' is a heterodimer of two subunits.

It carries out the reaction N(6)-[(R)-lipoyl]-L-lysyl-[glycine-cleavage complex H protein] + glycine + H(+) = N(6)-[(R)-S(8)-aminomethyldihydrolipoyl]-L-lysyl-[glycine-cleavage complex H protein] + CO2. The glycine cleavage system catalyzes the degradation of glycine. The P protein binds the alpha-amino group of glycine through its pyridoxal phosphate cofactor; CO(2) is released and the remaining methylamine moiety is then transferred to the lipoamide cofactor of the H protein. The sequence is that of Probable glycine dehydrogenase (decarboxylating) subunit 1 from Metallosphaera sedula (strain ATCC 51363 / DSM 5348 / JCM 9185 / NBRC 15509 / TH2).